A 685-amino-acid polypeptide reads, in one-letter code: Methionine--tRNA ligase (685 aa).

Residues 12–22 (PYANGSIHLGH) carry the 'HIGH' region motif. The Zn(2+) site is built by Cys143, Cys146, Cys156, and Cys159. A 'KMSKS' region motif is present at residues 339–343 (KMSKS). Residue Lys342 participates in ATP binding. The tRNA-binding domain occupies 582–685 (DFMKIDMRVA…TGAQPGDKVG (104 aa)).

The protein belongs to the class-I aminoacyl-tRNA synthetase family. MetG type 1 subfamily. Homodimer. Zn(2+) is required as a cofactor.

The protein localises to the cytoplasm. The enzyme catalyses tRNA(Met) + L-methionine + ATP = L-methionyl-tRNA(Met) + AMP + diphosphate. Its function is as follows. Is required not only for elongation of protein synthesis but also for the initiation of all mRNA translation through initiator tRNA(fMet) aminoacylation. The chain is Methionine--tRNA ligase from Neisseria meningitidis serogroup B (strain ATCC BAA-335 / MC58).